We begin with the raw amino-acid sequence, 188 residues long: Elongation factor P (188 aa).

Residue lysine 34 is modified to N6-(3,6-diaminohexanoyl)-5-hydroxylysine.

It belongs to the elongation factor P family. Post-translationally, may be beta-lysylated on the epsilon-amino group of Lys-34 by the combined action of EpmA and EpmB, and then hydroxylated on the C5 position of the same residue by EpmC (if this protein is present). Lysylation is critical for the stimulatory effect of EF-P on peptide-bond formation. The lysylation moiety may extend toward the peptidyltransferase center and stabilize the terminal 3-CCA end of the tRNA. Hydroxylation of the C5 position on Lys-34 may allow additional potential stabilizing hydrogen-bond interactions with the P-tRNA.

Its subcellular location is the cytoplasm. Its pathway is protein biosynthesis; polypeptide chain elongation. In terms of biological role, involved in peptide bond synthesis. Alleviates ribosome stalling that occurs when 3 or more consecutive Pro residues or the sequence PPG is present in a protein, possibly by augmenting the peptidyl transferase activity of the ribosome. Modification of Lys-34 is required for alleviation. This is Elongation factor P from Proteus mirabilis (strain HI4320).